A 391-amino-acid chain; its full sequence is 3-ketoacyl-CoA thiolase, peroxisomal (391 aa).

Catalysis depends on C92, which acts as the Acyl-thioester intermediate. Active-site proton acceptor residues include H335 and C366.

The protein belongs to the thiolase-like superfamily. Thiolase family. In terms of assembly, homodimer.

Its subcellular location is the peroxisome. It catalyses the reaction an acyl-CoA + acetyl-CoA = a 3-oxoacyl-CoA + CoA. The protein operates within lipid metabolism; fatty acid metabolism. The polypeptide is 3-ketoacyl-CoA thiolase, peroxisomal (FOX3) (Encephalitozoon cuniculi (strain GB-M1) (Microsporidian parasite)).